Reading from the N-terminus, the 188-residue chain is UPF0340 protein BH3766 (188 aa).

Belongs to the UPF0340 family.

The polypeptide is UPF0340 protein BH3766 (Halalkalibacterium halodurans (strain ATCC BAA-125 / DSM 18197 / FERM 7344 / JCM 9153 / C-125) (Bacillus halodurans)).